A 96-amino-acid chain; its full sequence is Exodeoxyribonuclease 7 small subunit (96 aa).

The interval R73–R96 is disordered.

This sequence belongs to the XseB family. As to quaternary structure, heterooligomer composed of large and small subunits.

It is found in the cytoplasm. It carries out the reaction Exonucleolytic cleavage in either 5'- to 3'- or 3'- to 5'-direction to yield nucleoside 5'-phosphates.. Functionally, bidirectionally degrades single-stranded DNA into large acid-insoluble oligonucleotides, which are then degraded further into small acid-soluble oligonucleotides. This chain is Exodeoxyribonuclease 7 small subunit, found in Acidothermus cellulolyticus (strain ATCC 43068 / DSM 8971 / 11B).